A 419-amino-acid polypeptide reads, in one-letter code: Tyrosine--tRNA ligase (419 aa).

Residue tyrosine 34 coordinates L-tyrosine. Residues 39 to 48 (PTADSLHIGN) carry the 'HIGH' region motif. L-tyrosine-binding residues include tyrosine 169 and glutamine 173. Positions 230–234 (KFGKT) match the 'KMSKS' region motif. Position 233 (lysine 233) interacts with ATP. An S4 RNA-binding domain is found at 352–419 (VPLVELLVSA…KKKYYLIRYA (68 aa)).

Belongs to the class-I aminoacyl-tRNA synthetase family. TyrS type 1 subfamily. In terms of assembly, homodimer.

Its subcellular location is the cytoplasm. It carries out the reaction tRNA(Tyr) + L-tyrosine + ATP = L-tyrosyl-tRNA(Tyr) + AMP + diphosphate + H(+). Catalyzes the attachment of tyrosine to tRNA(Tyr) in a two-step reaction: tyrosine is first activated by ATP to form Tyr-AMP and then transferred to the acceptor end of tRNA(Tyr). This Bacillus caldotenax protein is Tyrosine--tRNA ligase.